A 490-amino-acid polypeptide reads, in one-letter code: Sporulation-specific protein 1 (490 aa).

Residues 18–272 form the Protein kinase domain; that stretch reads YSIQSCIGRG…AYNLLSFEFV (255 aa). Residues 24–32 and lysine 47 each bind ATP; that span reads IGRGNFGDV. The active-site Proton acceptor is aspartate 141.

Belongs to the protein kinase superfamily. STE Ser/Thr protein kinase family. STE20 subfamily.

Its subcellular location is the nucleus. The protein localises to the cytoplasm. The catalysed reaction is L-seryl-[protein] + ATP = O-phospho-L-seryl-[protein] + ADP + H(+). The enzyme catalyses L-threonyl-[protein] + ATP = O-phospho-L-threonyl-[protein] + ADP + H(+). Functionally, serine/threonine protein kinase required for spore wall development. The protein is Sporulation-specific protein 1 (SPS1) of Saccharomyces cerevisiae (strain ATCC 204508 / S288c) (Baker's yeast).